The sequence spans 985 residues: Ephrin type-B receptor 1-A (985 aa).

Residues 1–19 (MELNVLLLLLCLSGGQVGA) form the signal peptide. At 20 to 542 (VEETLMDTRT…YKSELREQLP (523 aa)) the chain is on the extracellular side. The Eph LBD domain occupies 21–203 (EETLMDTRTA…FFKEMPSVVQ (183 aa)). 2 Fibronectin type-III domains span residues 324-434 (VPSG…TNQA) and 435-532 (APSS…TAED). N-linked (GlcNAc...) asparagine glycans are attached at residues Asn-336, Asn-428, and Asn-482. A helical transmembrane segment spans residues 543–563 (LTGSAAAGVVFIVSLVAISIV). Residues 564–985 (CSRKRTYSKE…QITQSPTSIA (422 aa)) are Cytoplasmic-facing. The Protein kinase domain occupies 620-883 (VKIEEVIGAG…EIVNTLRPMI (264 aa)). Residues 626–634 (IGAGEFGEV) and Lys-652 contribute to the ATP site. The Proton acceptor role is filled by Asp-745. Residues 912–976 (SAFTSVDDWL…LNSIQSMRVQ (65 aa)) form the SAM domain. Positions 983–985 (SIA) match the PDZ-binding motif.

This sequence belongs to the protein kinase superfamily. Tyr protein kinase family. Ephrin receptor subfamily. In terms of assembly, heterotetramer upon binding of the ligand. The heterotetramer is composed of an ephrin dimer and a receptor dimer. Oligomerization is probably required to induce biological responses. Post-translationally, phosphorylated. Autophosphorylation is stimulated by ligands.

Its subcellular location is the cell membrane. The protein localises to the early endosome membrane. It is found in the cell projection. The protein resides in the dendrite. It catalyses the reaction L-tyrosyl-[protein] + ATP = O-phospho-L-tyrosyl-[protein] + ADP + H(+). Its function is as follows. Receptor tyrosine kinase which binds promiscuously transmembrane ephrin-B family ligands residing on adjacent cells, leading to contact-dependent bidirectional signaling into neighboring cells. The signaling pathway downstream of the receptor is referred to as forward signaling while the signaling pathway downstream of the ephrin ligand is referred to as reverse signaling. May play a role in axon guidance during nervous system development. May also play an important redundant role with other ephrin-B receptors in development and maturation of dendritic spines and synapse formation. More generally, may play a role in targeted cell migration and adhesion. Upon activation by ephrin-B ligands activates the MAPK/ERK and the JNK signaling cascades to regulate cell migration and adhesion respectively. This chain is Ephrin type-B receptor 1-A (ephb1-a), found in Xenopus laevis (African clawed frog).